The sequence spans 344 residues: Phosphate acyltransferase (344 aa).

Belongs to the PlsX family. As to quaternary structure, homodimer. Probably interacts with PlsY.

The protein resides in the cytoplasm. It catalyses the reaction a fatty acyl-[ACP] + phosphate = an acyl phosphate + holo-[ACP]. The protein operates within lipid metabolism; phospholipid metabolism. Catalyzes the reversible formation of acyl-phosphate (acyl-PO(4)) from acyl-[acyl-carrier-protein] (acyl-ACP). This enzyme utilizes acyl-ACP as fatty acyl donor, but not acyl-CoA. The polypeptide is Phosphate acyltransferase (Actinobacillus pleuropneumoniae serotype 5b (strain L20)).